Here is a 393-residue protein sequence, read N- to C-terminus: Formate-dependent phosphoribosylglycinamide formyltransferase (393 aa).

N(1)-(5-phospho-beta-D-ribosyl)glycinamide contacts are provided by residues 22–23 (EL) and Glu-82. ATP is bound by residues Arg-114, Lys-155, 160-165 (SSGKGQ), 195-198 (ESFV), and Glu-203. The ATP-grasp domain occupies 119-308 (RLAAEEVGLK…EFALHVRAIL (190 aa)). The Mg(2+) site is built by Glu-267 and Glu-279. N(1)-(5-phospho-beta-D-ribosyl)glycinamide is bound by residues Asp-286, Lys-356, and 363–364 (RR).

This sequence belongs to the PurK/PurT family. Homodimer.

It catalyses the reaction N(1)-(5-phospho-beta-D-ribosyl)glycinamide + formate + ATP = N(2)-formyl-N(1)-(5-phospho-beta-D-ribosyl)glycinamide + ADP + phosphate + H(+). It functions in the pathway purine metabolism; IMP biosynthesis via de novo pathway; N(2)-formyl-N(1)-(5-phospho-D-ribosyl)glycinamide from N(1)-(5-phospho-D-ribosyl)glycinamide (formate route): step 1/1. Its function is as follows. Involved in the de novo purine biosynthesis. Catalyzes the transfer of formate to 5-phospho-ribosyl-glycinamide (GAR), producing 5-phospho-ribosyl-N-formylglycinamide (FGAR). Formate is provided by PurU via hydrolysis of 10-formyl-tetrahydrofolate. This is Formate-dependent phosphoribosylglycinamide formyltransferase from Maridesulfovibrio salexigens (strain ATCC 14822 / DSM 2638 / NCIMB 8403 / VKM B-1763) (Desulfovibrio salexigens).